Consider the following 85-residue polypeptide: Large ribosomal subunit protein bL27 (85 aa).

Residues 1–22 (MAHKKAGGSTRNGRDSESKRLG) are disordered.

The protein belongs to the bacterial ribosomal protein bL27 family.

In Aliivibrio salmonicida (strain LFI1238) (Vibrio salmonicida (strain LFI1238)), this protein is Large ribosomal subunit protein bL27.